The chain runs to 287 residues: MAGAKEIRSKIASVQNTQKITKAMEMVAASKMRKTQERMAASRPYAETMRSVIGHLALGNLEYKHPYLEEREVKRVGYLVVSTDRGLCGGLNINLFKKLLADMKEWSDKGVEVDLALVGSKAVSFFASVGGNVVGQVTGMGDDPQLSDLIGPVNIMLQAYDEGRLDKLYVVANKFINTMAQEPKILQVLPLPPGDDEELKEKSWDYLYEPDPKTLLDTLLRRYIESQVYQSVVENLASEQAARMVAMKAATDNGGNLIKELQLVYNKARQASITQELTEIVSGAAAV.

It belongs to the ATPase gamma chain family. F-type ATPases have 2 components, CF(1) - the catalytic core - and CF(0) - the membrane proton channel. CF(1) has five subunits: alpha(3), beta(3), gamma(1), delta(1), epsilon(1). CF(0) has three main subunits: a, b and c.

The protein resides in the cell inner membrane. Functionally, produces ATP from ADP in the presence of a proton gradient across the membrane. The gamma chain is believed to be important in regulating ATPase activity and the flow of protons through the CF(0) complex. This chain is ATP synthase gamma chain, found in Proteus mirabilis (strain HI4320).